The following is a 275-amino-acid chain: WIMGHMVNEIYQIDEFVDLGANSIETDVRFDDNAMAEYTFHGVPCDCRRWCHKWEYINTFLEGLRRATTPGDSKYRSELILVVFDLKTSQLSSSNAYKGGKLFAEKLLRYYWNGGNNGGRAYIILSIPKIDHYAFISGFRDALKESKHEDLLAKVGYDFSGNDDLDSIRSALNKAGVKDKEHVWQSDGITNCIARNLNRVREAVQNRDSANGYINKVYYWTIEKYVSVRDALNAEVDGIMTNYPNVIVNVLNEDNFRNRFRMATFEDNPWEHFTR.

H5 is an active-site residue. Positions 25 and 27 each coordinate Mg(2+). The Nucleophile role is filled by H41. Disulfide bonds link C45–C51 and C47–C192. D85 lines the Mg(2+) pocket.

Belongs to the arthropod phospholipase D family. Class II subfamily. It depends on Mg(2+) as a cofactor. Expressed by the venom gland.

It is found in the secreted. The catalysed reaction is an N-(acyl)-sphingosylphosphocholine = an N-(acyl)-sphingosyl-1,3-cyclic phosphate + choline. The enzyme catalyses an N-(acyl)-sphingosylphosphoethanolamine = an N-(acyl)-sphingosyl-1,3-cyclic phosphate + ethanolamine. It catalyses the reaction a 1-acyl-sn-glycero-3-phosphocholine = a 1-acyl-sn-glycero-2,3-cyclic phosphate + choline. It carries out the reaction a 1-acyl-sn-glycero-3-phosphoethanolamine = a 1-acyl-sn-glycero-2,3-cyclic phosphate + ethanolamine. Dermonecrotic toxins cleave the phosphodiester linkage between the phosphate and headgroup of certain phospholipids (sphingolipid and lysolipid substrates), forming an alcohol (often choline) and a cyclic phosphate. This toxin acts on sphingomyelin (SM). It may also act on ceramide phosphoethanolamine (CPE), lysophosphatidylcholine (LPC) and lysophosphatidylethanolamine (LPE), but not on lysophosphatidylserine (LPS), and lysophosphatidylglycerol (LPG). It acts by transphosphatidylation, releasing exclusively cyclic phosphate products as second products. Induces dermonecrosis, hemolysis, increased vascular permeability, edema, inflammatory response, and platelet aggregation. In Loxosceles rufescens (Mediterranean recluse spider), this protein is Dermonecrotic toxin LruSicTox-alphaIV1.